We begin with the raw amino-acid sequence, 855 residues long: Lon protease (855 aa).

The Lon N-terminal domain maps to 45–288 (IYLLTVKNVV…ETFRFLNIEY (244 aa)). Residue 439–446 (GPPGVGKT) participates in ATP binding. Positions 674 to 855 (IQVPGVVTGL…NEVIDLSIIK (182 aa)) constitute a Lon proteolytic domain. Catalysis depends on residues S761 and K804.

This sequence belongs to the peptidase S16 family. In terms of assembly, homohexamer. Organized in a ring with a central cavity.

It is found in the cytoplasm. The enzyme catalyses Hydrolysis of proteins in presence of ATP.. Functionally, ATP-dependent serine protease that mediates the selective degradation of mutant and abnormal proteins as well as certain short-lived regulatory proteins. Required for cellular homeostasis and for survival from DNA damage and developmental changes induced by stress. Degrades polypeptides processively to yield small peptide fragments that are 5 to 10 amino acids long. Binds to DNA in a double-stranded, site-specific manner. This chain is Lon protease, found in Karelsulcia muelleri (strain GWSS) (Sulcia muelleri).